Consider the following 70-residue polypeptide: MQTAYWVMVMMMVWITAPLSEGGKLNDVIRGLVPDDVTPKRILQSLISRRRFDGRALFVPSCIWKTCPYG.

Positions Met1–Gly22 are cleaved as a signal peptide. The propeptide occupies Gly23–Arg55. Cys62 and Cys67 are joined by a disulfide. At Trp64 the chain carries D-tryptophan. The residue at position 68 (Pro68) is a 4-hydroxyproline. Tyr69 bears the Tyrosine amide mark.

This sequence belongs to the conotoxin C superfamily. Consomatin family. Expressed by the venom duct.

It is found in the secreted. Moderately activates human somatostatin receptors (SSTR) with a preferential activation of SSTR1 and SSTR4. In vivo, does not cause behavioral changes in mice within a few minutes of intracranial injection, but causes a progressive loss of movement thereafter. Four to five hours after injection, mice recover, even with the highest dose tested. Shows antinociception and antihyperalgesia activities in two mouse models of acute pain, most probably by acting outside the central nervous system. This is Consomatin Mrc3 from Conus mercator (Trader cone).